Consider the following 433-residue polypeptide: tRNA-2-methylthio-N(6)-dimethylallyladenosine synthase (433 aa).

In terms of domain architecture, MTTase N-terminal spans 3–118 (KRLYIETLGC…IRDVIKQEKA (116 aa)). Residues Cys-12, Cys-49, Cys-81, Cys-150, Cys-154, and Cys-157 each contribute to the [4Fe-4S] cluster site. Positions 136-371 (RTSPYKAFIN…LHLQMLDSIS (236 aa)) constitute a Radical SAM core domain. Positions 372-433 (EQEKDKVYEV…RLSLEGELVG (62 aa)) constitute a TRAM domain.

It belongs to the methylthiotransferase family. MiaB subfamily. As to quaternary structure, monomer. It depends on [4Fe-4S] cluster as a cofactor.

Its subcellular location is the cytoplasm. It catalyses the reaction N(6)-dimethylallyladenosine(37) in tRNA + (sulfur carrier)-SH + AH2 + 2 S-adenosyl-L-methionine = 2-methylsulfanyl-N(6)-dimethylallyladenosine(37) in tRNA + (sulfur carrier)-H + 5'-deoxyadenosine + L-methionine + A + S-adenosyl-L-homocysteine + 2 H(+). In terms of biological role, catalyzes the methylthiolation of N6-(dimethylallyl)adenosine (i(6)A), leading to the formation of 2-methylthio-N6-(dimethylallyl)adenosine (ms(2)i(6)A) at position 37 in tRNAs that read codons beginning with uridine. The chain is tRNA-2-methylthio-N(6)-dimethylallyladenosine synthase from Nitratiruptor sp. (strain SB155-2).